A 524-amino-acid chain; its full sequence is L-lactate permease (524 aa).

13 consecutive transmembrane segments (helical) span residues 12–34 (LAVS…TVFK), 38–60 (IQAA…HLPF), 67–89 (IVQG…VWLY), 127–149 (LEGA…SLGF), 156–178 (MLCL…VGII), 193–215 (SMMT…IWLM), 224–246 (ILPA…TIFI), 250–267 (LADI…ALFL), 297–319 (WSPF…KGLL), 339–361 (IEVG…VTTV), 374–396 (SLLK…IIGI), 411–433 (EAVA…IGVF), and 505–522 (YSFG…ILSL).

This sequence belongs to the lactate permease family.

Its subcellular location is the cell membrane. In terms of biological role, may play a role in L-lactate transport. In Halalkalibacterium halodurans (strain ATCC BAA-125 / DSM 18197 / FERM 7344 / JCM 9153 / C-125) (Bacillus halodurans), this protein is L-lactate permease (lctP).